The sequence spans 451 residues: UDP-N-acetyl-alpha-D-muramoyl-L-alanyl-L-glutamate epimerase (451 aa).

It belongs to the MurL family.

It catalyses the reaction UDP-N-acetyl-alpha-D-muramoyl-L-alanyl-L-glutamate + ATP + H2O = UDP-N-acetyl-alpha-D-muramoyl-L-alanyl-D-glutamate + AMP + diphosphate + H(+). It functions in the pathway cell wall biogenesis; peptidoglycan biosynthesis. Cell wall formation. Catalyzes epimerization of the terminal L-glutamate in UDP-N-acetyl-alpha-D-muramoyl-L-alanyl-L-glutamate. The protein is UDP-N-acetyl-alpha-D-muramoyl-L-alanyl-L-glutamate epimerase of Xanthomonas oryzae pv. oryzae (strain MAFF 311018).